Reading from the N-terminus, the 500-residue chain is Centrosomal protein of 57 kDa (500 aa).

A compositionally biased stretch (low complexity) spans 1 to 17 (MAAASVSAASGSHLSNS). Disordered stretches follow at residues 1–34 (MAAA…HSSS) and 43–62 (KPFL…LAYP). Polar residues predominate over residues 18–34 (FAEPSRSNGSMVRHSSS). Residues Ser-53 and Ser-55 each carry the phosphoserine modification. The tract at residues 58 to 239 (TLAYPESNSR…KAAELQTGLE (182 aa)) is centrosome localization domain (CLD). Coiled coils occupy residues 63–242 (ESNS…ETNR) and 392–492 (ELKD…NSLQ). The segment at 277–491 (GAQPHYRLCL…KDMQSIQNSL (215 aa)) is mediates interaction with microtubules. A compositionally biased stretch (basic and acidic residues) spans 434 to 450 (KKELKATKKTLDEERNS). The disordered stretch occupies residues 434–472 (KKELKATKKTLDEERNSSSRSGITGTTNKKDFMKLRPGE). Positions 451–460 (SSRSGITGTT) are enriched in polar residues. A compositionally biased stretch (basic and acidic residues) spans 461-471 (NKKDFMKLRPG).

The protein belongs to the translokin family. In terms of assembly, homodimer and homooligomer. Interacts with microtubules. Interacts with FGF2 and RAP80. Does not interact with FGF1 or FGF2 isoform 24 kDa. Ubiquitous.

It localises to the nucleus. It is found in the cytoplasm. Its subcellular location is the cytoskeleton. The protein resides in the microtubule organizing center. The protein localises to the centrosome. Functionally, centrosomal protein which may be required for microtubule attachment to centrosomes. May act by forming ring-like structures around microtubules. Mediates nuclear translocation and mitogenic activity of the internalized growth factor FGF2, but that of FGF1. This is Centrosomal protein of 57 kDa (CEP57) from Homo sapiens (Human).